The chain runs to 178 residues: Matrix-remodeling-associated protein 7 (178 aa).

A helical transmembrane segment spans residues 7–27 (LLAALPALVTALALLLAWLLL). Residues 33-121 (RVPAPESTAS…AFSFKYSPGQ (89 aa)) are disordered. The segment covering 48 to 65 (APAPPEPPESCAPEPAPE) has biased composition (pro residues). The segment covering 76 to 85 (PEESEAEEPA) has biased composition (acidic residues). Ser-79 and Ser-165 each carry phosphoserine.

It localises to the membrane. The polypeptide is Matrix-remodeling-associated protein 7 (Mxra7) (Mus musculus (Mouse)).